Reading from the N-terminus, the 796-residue chain is Quinoprotein glucose dehydrogenase (796 aa).

Over 1 to 10 (MAINNTGSRR) the chain is Cytoplasmic. A helical membrane pass occupies residues 11 to 37 (LLVTLTALFAALCGLYLLIGGGWLVAI). Over 38-40 (GGS) the chain is Periplasmic. A helical membrane pass occupies residues 41–58 (WYYPIAGLVMLGVAWMLW). Residues 59–62 (RSKR) lie on the Cytoplasmic side of the membrane. Residues 63–81 (AALWLYAALLLGTMIWGVW) traverse the membrane as a helical segment. At 82-95 (EVGFDFWALTPRSD) the chain is on the periplasmic side. The helical transmembrane segment at 96–110 (ILVFFGIWLILPFVW) threads the bilayer. The Cytoplasmic segment spans residues 111-118 (RRLVIPAS). A helical membrane pass occupies residues 119–141 (GAVAALVVALLISGGILTWAGFN). The Periplasmic segment spans residues 142–796 (DPQEINGTLS…VAYALPDDVK (655 aa)). The active-site Proton acceptor is Asp466.

It belongs to the bacterial PQQ dehydrogenase family. Monomer. Pyrroloquinoline quinone is required as a cofactor.

The protein resides in the cell inner membrane. The enzyme catalyses a ubiquinone + D-glucose = D-glucono-1,5-lactone + a ubiquinol. GDH is probably involved in energy conservation rather than in sugar metabolism. The chain is Quinoprotein glucose dehydrogenase (gcd) from Escherichia coli (strain K12).